A 207-amino-acid chain; its full sequence is Guanylate kinase (207 aa).

The region spanning 4-184 is the Guanylate kinase-like domain; that stretch reads GTLYIVSAPS…AQMDFRSIIR (181 aa). 11 to 18 provides a ligand contact to ATP; it reads APSGAGKS.

Belongs to the guanylate kinase family.

Its subcellular location is the cytoplasm. It carries out the reaction GMP + ATP = GDP + ADP. Essential for recycling GMP and indirectly, cGMP. The sequence is that of Guanylate kinase from Aliivibrio fischeri (strain ATCC 700601 / ES114) (Vibrio fischeri).